Reading from the N-terminus, the 280-residue chain is Maltodextrin transport system permease protein MalD (280 aa).

Transmembrane regions (helical) follow at residues 15 to 35 (LTYL…LITI), 77 to 97 (LIIA…AGYA), 110 to 130 (LVFF…AFFV), 142 to 162 (WFLI…LMKG), 200 to 220 (VQAL…SFLL), and 244 to 264 (IAYF…LFFF). An ABC transmembrane type-1 domain is found at 73 to 265 (YLNTLIIALI…LPICILFFFL (193 aa)).

Belongs to the binding-protein-dependent transport system permease family. MalFG subfamily.

It localises to the cell membrane. Part of the binding-protein-dependent transport system for maltodextrin; probably responsible for the translocation of the substrate across the membrane. The chain is Maltodextrin transport system permease protein MalD (malD) from Streptococcus pneumoniae (strain ATCC BAA-255 / R6).